We begin with the raw amino-acid sequence, 391 residues long: Formate-dependent phosphoribosylglycinamide formyltransferase (391 aa).

N(1)-(5-phospho-beta-D-ribosyl)glycinamide is bound by residues 20–21 (EL) and Glu-80. ATP-binding positions include Arg-112, Lys-153, 158-163 (SSGKGQ), 193-196 (EGFV), and Glu-201. The ATP-grasp domain maps to 117-306 (RLAAEELGLP…EFALHVRAFT (190 aa)). Glu-265 and Glu-277 together coordinate Mg(2+). N(1)-(5-phospho-beta-D-ribosyl)glycinamide contacts are provided by residues Asp-284, Lys-354, and 361–362 (RR).

This sequence belongs to the PurK/PurT family. Homodimer.

The catalysed reaction is N(1)-(5-phospho-beta-D-ribosyl)glycinamide + formate + ATP = N(2)-formyl-N(1)-(5-phospho-beta-D-ribosyl)glycinamide + ADP + phosphate + H(+). The protein operates within purine metabolism; IMP biosynthesis via de novo pathway; N(2)-formyl-N(1)-(5-phospho-D-ribosyl)glycinamide from N(1)-(5-phospho-D-ribosyl)glycinamide (formate route): step 1/1. Involved in the de novo purine biosynthesis. Catalyzes the transfer of formate to 5-phospho-ribosyl-glycinamide (GAR), producing 5-phospho-ribosyl-N-formylglycinamide (FGAR). Formate is provided by PurU via hydrolysis of 10-formyl-tetrahydrofolate. The polypeptide is Formate-dependent phosphoribosylglycinamide formyltransferase (Vibrio cholerae serotype O1 (strain ATCC 39315 / El Tor Inaba N16961)).